Reading from the N-terminus, the 623-residue chain is Transketolase (623 aa).

Residue methionine 1 is modified to N-acetylmethionine. Lysine 6 and lysine 11 each carry N6-acetyllysine. Histidine 37 contributes to the substrate binding site. Serine 40 and histidine 77 together coordinate thiamine diphosphate. Phosphoserine is present on serine 104. Residue 123-125 (GSL) coordinates thiamine diphosphate. Lysine 144 carries the post-translational modification N6-acetyllysine. Position 155 (aspartate 155) interacts with Mg(2+). Residues glycine 156 and asparagine 185 each coordinate thiamine diphosphate. Mg(2+) contacts are provided by asparagine 185 and leucine 187. Lysine 204, lysine 232, and lysine 241 each carry N6-acetyllysine. 2 residues coordinate thiamine diphosphate: lysine 244 and histidine 258. Histidine 258 lines the substrate pocket. The residue at position 260 (lysine 260) is an N6-acetyllysine. The residue at position 275 (tyrosine 275) is a Phosphotyrosine. Threonine 287 bears the Phosphothreonine mark. Residue serine 295 is modified to Phosphoserine. Substrate-binding residues include arginine 318 and serine 345. A Phosphoserine modification is found at serine 345. A Glycyl lysine isopeptide (Lys-Gly) (interchain with G-Cter in SUMO2) cross-link involves residue lysine 352. The active-site Proton donor is glutamate 366. Thiamine diphosphate is bound at residue phenylalanine 392. Histidine 416 and aspartate 424 together coordinate substrate. Glutamine 428 contributes to the thiamine diphosphate binding site. Residue arginine 474 coordinates substrate. 2 positions are modified to N6-acetyllysine: lysine 538 and lysine 603.

The protein belongs to the transketolase family. Homodimer. Requires Mg(2+) as cofactor. It depends on Ca(2+) as a cofactor. Mn(2+) serves as cofactor. The cofactor is Co(2+). Thiamine diphosphate is required as a cofactor.

The enzyme catalyses D-sedoheptulose 7-phosphate + D-glyceraldehyde 3-phosphate = aldehydo-D-ribose 5-phosphate + D-xylulose 5-phosphate. Functionally, catalyzes the transfer of a two-carbon ketol group from a ketose donor to an aldose acceptor, via a covalent intermediate with the cofactor thiamine pyrophosphate. This Rattus norvegicus (Rat) protein is Transketolase (Tkt).